A 376-amino-acid polypeptide reads, in one-letter code: Nuclear egress protein 1 (376 aa).

Position 19 is a phosphoserine (serine 19). The disordered stretch occupies residues 22 to 57; that stretch reads RKRRQRELASKVASTVNGATSANNHGEPPSPADARP. Over residues 33 to 45 the composition is skewed to polar residues; the sequence is VASTVNGATSANN. The segment at 106–211 adopts a CCCH-type zinc-finger fold; that stretch reads CLDISPYGNE…HVIFENPDVH (106 aa). A disordered region spans residues 316-376; sequence VVSTNGCGPS…PLFLNSIRAP (61 aa). The segment covering 317 to 332 has biased composition (polar residues); the sequence is VSTNGCGPSSSSQSTP.

This sequence belongs to the herpesviridae NEC1 protein family. In terms of assembly, forms a heterohexameric complex with NEC2. Interacts with capsid vertex specific component 2/CVC2; this interaction directs the capsid to the host inner nuclear membrane to initiate budding. In terms of processing, phosphorylated at serine residues in the N-terminus. This phosphorylation regulates the localization within the inner nuclear membrane. Phosphorylation by viral kinase UL97 at Ser-19 plays an important role for correct viral nuclear egress complex (NEC) localization.

Its subcellular location is the host nucleus inner membrane. Functionally, plays an essential role in virion nuclear egress, the first step of virion release from infected cell. Within the host nucleus, NEC1 interacts with the newly formed capsid through the vertexes and directs it to the inner nuclear membrane by associating with NEC2. Induces the budding of the capsid at the inner nuclear membrane as well as its envelopment into the perinuclear space. There, the NEC1/NEC2 complex promotes the fusion of the enveloped capsid with the outer nuclear membrane and the subsequent release of the viral capsid into the cytoplasm where it will reach the secondary budding sites in the host Golgi or trans-Golgi network. The sequence is that of Nuclear egress protein 1 from Homo sapiens (Human).